The primary structure comprises 362 residues: tRNA-specific 2-thiouridylase MnmA (362 aa).

Residues 13–20 and Met-39 each bind ATP; that span reads GLSGGVDS. Positions 99-101 are interaction with target base in tRNA; the sequence is NPD. Residue Cys-104 is the Nucleophile of the active site. Cys-104 and Cys-200 are oxidised to a cystine. Gly-128 provides a ligand contact to ATP. Residues 150–152 form an interaction with tRNA region; it reads KDQ. Cys-200 (cysteine persulfide intermediate) is an active-site residue.

This sequence belongs to the MnmA/TRMU family.

The protein localises to the cytoplasm. It carries out the reaction S-sulfanyl-L-cysteinyl-[protein] + uridine(34) in tRNA + AH2 + ATP = 2-thiouridine(34) in tRNA + L-cysteinyl-[protein] + A + AMP + diphosphate + H(+). In terms of biological role, catalyzes the 2-thiolation of uridine at the wobble position (U34) of tRNA, leading to the formation of s(2)U34. In Coxiella burnetii (strain Dugway 5J108-111), this protein is tRNA-specific 2-thiouridylase MnmA.